The primary structure comprises 239 residues: Endonuclease V (239 aa).

Residues D50 and D118 each contribute to the Mg(2+) site.

Belongs to the endonuclease V family. Mg(2+) serves as cofactor.

The protein resides in the cytoplasm. It catalyses the reaction Endonucleolytic cleavage at apurinic or apyrimidinic sites to products with a 5'-phosphate.. Its function is as follows. DNA repair enzyme involved in the repair of deaminated bases. Selectively cleaves double-stranded DNA at the second phosphodiester bond 3' to a deoxyinosine leaving behind the intact lesion on the nicked DNA. In Xylella fastidiosa (strain 9a5c), this protein is Endonuclease V.